A 497-amino-acid polypeptide reads, in one-letter code: Probable D-lactate dehydrogenase, mitochondrial (497 aa).

Positions 65-246 constitute an FAD-binding PCMH-type domain; it reads HRCRPPDVVV…TKATLRLYGV (182 aa).

The protein belongs to the FAD-binding oxidoreductase/transferase type 4 family. The cofactor is FAD.

It is found in the mitochondrion. The enzyme catalyses (R)-lactate + 2 Fe(III)-[cytochrome c] = 2 Fe(II)-[cytochrome c] + pyruvate + 2 H(+). Its function is as follows. Involved in D-lactate, but not L-lactate catabolic process. The protein is Probable D-lactate dehydrogenase, mitochondrial (ldhd) of Danio rerio (Zebrafish).